Here is a 257-residue protein sequence, read N- to C-terminus: Thiazole synthase (257 aa).

Residue Lys95 is the Schiff-base intermediate with DXP of the active site. Residues Gly156, 182–183, and 204–205 contribute to the 1-deoxy-D-xylulose 5-phosphate site; these read AG and NT.

This sequence belongs to the ThiG family. In terms of assembly, homotetramer. Forms heterodimers with either ThiH or ThiS.

It localises to the cytoplasm. It catalyses the reaction [ThiS sulfur-carrier protein]-C-terminal-Gly-aminoethanethioate + 2-iminoacetate + 1-deoxy-D-xylulose 5-phosphate = [ThiS sulfur-carrier protein]-C-terminal Gly-Gly + 2-[(2R,5Z)-2-carboxy-4-methylthiazol-5(2H)-ylidene]ethyl phosphate + 2 H2O + H(+). The protein operates within cofactor biosynthesis; thiamine diphosphate biosynthesis. In terms of biological role, catalyzes the rearrangement of 1-deoxy-D-xylulose 5-phosphate (DXP) to produce the thiazole phosphate moiety of thiamine. Sulfur is provided by the thiocarboxylate moiety of the carrier protein ThiS. In vitro, sulfur can be provided by H(2)S. The chain is Thiazole synthase from Fusobacterium nucleatum subsp. nucleatum (strain ATCC 25586 / DSM 15643 / BCRC 10681 / CIP 101130 / JCM 8532 / KCTC 2640 / LMG 13131 / VPI 4355).